Reading from the N-terminus, the 560-residue chain is NRAMP-like transporter smf-3 (560 aa).

At 1-43 the chain is on the cytoplasmic side; that stretch reads MEGEMKCPIEEIREKPEMRKAQQTYEVQVEVEDTPDTTFSWRK. A helical transmembrane segment spans residues 44–64; that stretch reads LWAFTGPGFLMSIAYLDPGNI. The Extracellular segment spans residues 65–71; the sequence is ESDLQAG. The helical transmembrane segment at 72–92 threads the bilayer; it reads AISYFKLIWVLLVAHIMGLLL. Residues 93-120 lie on the Cytoplasmic side of the membrane; the sequence is QRLAARLGVVSGKHMAEIAFSYYPKIPR. A helical membrane pass occupies residues 121-141; that stretch reads LVLWMLVESAIVGSDMQEVIG. Over 142-152 the chain is Extracellular; it reads TAISFYLLSNG. The chain crosses the membrane as a helical span at residues 153–173; it reads VIPLWAGVLITICDTFTFLFL. Residues 174 to 182 are Cytoplasmic-facing; the sequence is EKYGVRKFE. Residues 183 to 203 form a helical membrane-spanning segment; it reads AFFCFLITCMAITFGYEFGVS. Residues 204–229 are Extracellular-facing; that stretch reads APDAGKMFSGMFVPWCNGCDNNMVMQ. A helical transmembrane segment spans residues 230–250; it reads GVAIIGAVIMPHNFYLHSALV. The Cytoplasmic portion of the chain corresponds to 251–268; it reads KSRRVDRRRAEKVTEANK. Residues 269–289 traverse the membrane as a helical segment; that stretch reads YFFIESAFALFVSFIINTLVI. At 290–339 the chain is on the extracellular side; sequence SVFAQGMYGKTNQDIRDTCYNNTHNGMPDFYKVEFPANNDAAQSDIYHAG. Asparagine 310 is a glycosylation site (N-linked (GlcNAc...) asparagine). A helical transmembrane segment spans residues 340-360; it reads IFLGCTFGIFALYVWAVGILA. Topologically, residues 361–390 are cytoplasmic; that stretch reads AGQSSTMTGTYAGQFAMEGFIQIKLPQWKR. Residues 391 to 411 traverse the membrane as a helical segment; that stretch reads ILITRSLAILPTLAVVIFSGG. At 412–420 the chain is on the extracellular side; sequence IDNISSLND. The N-linked (GlcNAc...) asparagine glycan is linked to asparagine 414. A helical membrane pass occupies residues 421 to 441; it reads FLNCLQLIQLPFALIPVLTFV. The Cytoplasmic segment spans residues 442 to 458; sequence SDRNIMHEYKLASVSKV. Residues 459 to 479 form a helical membrane-spanning segment; it reads VSIVISLIILFINFYFLYSWI. Residues 480–486 are Extracellular-facing; that stretch reads GSTFGYN. The chain crosses the membrane as a helical span at residues 487 to 507; it reads AVSIPITIFCAIFYIIFIAYL. Residues 508-560 lie on the Cytoplasmic side of the membrane; sequence TYYCLVAMEFISPIQTKWLAEPIYHDFDAPWLEDSENPSTKNTISDDELSMRY.

Belongs to the NRAMP family. As to expression, expressed in dopaminergic neurons (at protein level). Expressed in intestine with a weaker expression in the most proximal and distal regions. Weakly expressed in the hyp1-6, hyp7 and hyp8-12 hypodermis and in head and tail neurons.

It localises to the apical cell membrane. Its subcellular location is the cytoplasmic vesicle membrane. Probable divalent metal ion transporter which regulates the uptake of several heavy metals such as Mn(2+), Al(3+) and iron. Plays a role in modulating Al(3+)-induced dopamine (DA) neuron degeneration through the intracellular sequestration of Al(3+). In Caenorhabditis elegans, this protein is NRAMP-like transporter smf-3.